A 312-amino-acid chain; its full sequence is Serine acetyltransferase 5 (312 aa).

A compositionally biased stretch (basic and acidic residues) spans 1-17 (MPPAGELRHQSPSKEKL). Residues 1-25 (MPPAGELRHQSPSKEKLSSVTQSDE) are disordered.

The protein belongs to the transferase hexapeptide repeat family. In terms of assembly, homomultimer. Mostly expressed in stems, flowers and siliques. Localized in vascular tissues, particularly in phloem.

The protein resides in the cytoplasm. It carries out the reaction L-serine + acetyl-CoA = O-acetyl-L-serine + CoA. Its pathway is amino-acid biosynthesis; L-cysteine biosynthesis; L-cysteine from L-serine: step 1/2. Its activity is regulated as follows. Feedback inhibitions by L-Ser and acetyl-CoA. The sequence is that of Serine acetyltransferase 5 (SAT5) from Arabidopsis thaliana (Mouse-ear cress).